The following is a 30-amino-acid chain: HLGVVGLGGLGHVAVXQEAIENLXADEFLI.

It belongs to the zinc-containing alcohol dehydrogenase family.

The protein is Unknown protein from spot 365 of 2D-PAGE of etiolated coleoptile of Zea mays (Maize).